The following is a 126-amino-acid chain: Ribosome-binding factor A (126 aa).

The protein belongs to the RbfA family. In terms of assembly, monomer. Binds 30S ribosomal subunits, but not 50S ribosomal subunits or 70S ribosomes.

It is found in the cytoplasm. In terms of biological role, one of several proteins that assist in the late maturation steps of the functional core of the 30S ribosomal subunit. Associates with free 30S ribosomal subunits (but not with 30S subunits that are part of 70S ribosomes or polysomes). Required for efficient processing of 16S rRNA. May interact with the 5'-terminal helix region of 16S rRNA. This is Ribosome-binding factor A from Thermosynechococcus vestitus (strain NIES-2133 / IAM M-273 / BP-1).